The sequence spans 328 residues: MGAAARLSAPRALVLWAALGAAAHIGPAPDPEDWWSYKDNLQGNFVPGPPFWGLVNAAWSLCAVGKRQSPVDVELKRVLYDPFLPPLRLSTGGEKLRGTLYNTGRHVSFLPAPRPVVNVSGGPLLYSHRLSELRLLFGARDGAGSEHQINHQGFSAEVQLIHFNQELYGNFSAASRGPNGLAILSLFVNVASTSNPFLSRLLNRDTITRISYKNDAYFLQDLSLELLFPESFGFITYQGSLSTPPCSETVTWILIDRALNITSLQMHSLRLLSQNPPSQIFQSLSGNSRPLQPLAHRALRGNRDPRHPERRCRGPNYRLHVDGVPHGR.

Residues 1-23 (MGAAARLSAPRALVLWAALGAAA) form the signal peptide. One can recognise an Alpha-carbonic anhydrase domain in the interval 33–303 (DWWSYKDNLQ…LAHRALRGNR (271 aa)). Asn-118, Asn-170, and Asn-260 each carry an N-linked (GlcNAc...) asparagine glycan. A disordered region spans residues 299 to 328 (LRGNRDPRHPERRCRGPNYRLHVDGVPHGR). The segment covering 319 to 328 (LHVDGVPHGR) has biased composition (basic and acidic residues).

It belongs to the alpha-carbonic anhydrase family. As to expression, expressed abundantly in the brain with moderate expression also present in spinal cord and thyroid.

It localises to the secreted. Functionally, does not have a catalytic activity. This is Carbonic anhydrase-related protein 11 (CA11) from Homo sapiens (Human).